Here is a 476-residue protein sequence, read N- to C-terminus: Serine protease HTRA1B (476 aa).

A signal peptide spans 1–19 (MRLLILCASIILVPLLCDA). Positions 25–109 (YVIGCPERCD…RGKTGVCVCK (85 aa)) constitute an IGFBP N-terminal domain. 6 disulfides stabilise this stretch: cysteine 29–cysteine 54, cysteine 33–cysteine 56, cysteine 38–cysteine 57, cysteine 45–cysteine 60, cysteine 68–cysteine 85, and cysteine 79–cysteine 106. A Kazal-like domain is found at 94-153 (TTTVRRRGKTGVCVCKSSEPVCGSDGVSYRNICELKRVSNRAQKLQQPPIIFIQRGACGK). Positions 200–360 (GSGFVVSEDG…IPSDKIRQFL (161 aa)) are serine protease. Active-site charge relay system residues include histidine 216, aspartate 246, and serine 324. The PDZ domain maps to 361-463 (AESHDRQAKG…LRAVVRRGNE (103 aa)).

Belongs to the peptidase S1C family. In terms of assembly, forms homotrimers. In the presence of substrate, may form higher-order multimers in a PDZ-independent manner.

It is found in the secreted. Its subcellular location is the cytoplasm. The protein resides in the cytosol. Serine protease with a variety of targets, including extracellular matrix proteins and proteoglycans. Through cleavage of proteoglycans, may release soluble FGF-glycosaminoglycan complexes that promote the range and intensity of FGF signals in the extracellular space. Regulates the availability of insulin-like growth factors (IGFs) by cleaving IGF-binding proteins. Inhibits signaling mediated by TGF-beta family members. Consequently, may regulate many physiological processes. Intracellularly, degrades TSC2, leading to the activation of TSC2 downstream targets. The protein is Serine protease HTRA1B (htra1b) of Danio rerio (Zebrafish).